The primary structure comprises 449 residues: Tubulin beta-5 chain (449 aa).

8 residues coordinate GTP: Gln-11, Glu-70, Ser-139, Gly-143, Thr-144, Gly-145, Asn-205, and Asn-227. Residue Glu-70 participates in Mg(2+) binding. The interval 427-449 (QDATADEEGEYDVEEEEEGDYET) is disordered. Positions 430–449 (TADEEGEYDVEEEEEGDYET) are enriched in acidic residues.

This sequence belongs to the tubulin family. As to quaternary structure, dimer of alpha and beta chains. A typical microtubule is a hollow water-filled tube with an outer diameter of 25 nm and an inner diameter of 15 nM. Alpha-beta heterodimers associate head-to-tail to form protofilaments running lengthwise along the microtubule wall with the beta-tubulin subunit facing the microtubule plus end conferring a structural polarity. Microtubules usually have 13 protofilaments but different protofilament numbers can be found in some organisms and specialized cells. The cofactor is Mg(2+).

It localises to the cytoplasm. It is found in the cytoskeleton. In terms of biological role, tubulin is the major constituent of microtubules, a cylinder consisting of laterally associated linear protofilaments composed of alpha- and beta-tubulin heterodimers. Microtubules grow by the addition of GTP-tubulin dimers to the microtubule end, where a stabilizing cap forms. Below the cap, tubulin dimers are in GDP-bound state, owing to GTPase activity of alpha-tubulin. The polypeptide is Tubulin beta-5 chain (TUBB5) (Arabidopsis thaliana (Mouse-ear cress)).